The primary structure comprises 238 residues: Uridylate kinase (238 aa).

12–15 (KLSG) lines the ATP pocket. The involved in allosteric activation by GTP stretch occupies residues 20–25 (GQQGFG). Gly-54 contributes to the UMP binding site. 2 residues coordinate ATP: Gly-55 and Arg-59. Residues Asp-74 and 135-142 (TGNPFFTT) contribute to the UMP site. ATP is bound by residues Thr-162, Asn-163, Tyr-168, and Asp-171.

It belongs to the UMP kinase family. As to quaternary structure, homohexamer.

The protein localises to the cytoplasm. The catalysed reaction is UMP + ATP = UDP + ADP. The protein operates within pyrimidine metabolism; CTP biosynthesis via de novo pathway; UDP from UMP (UMPK route): step 1/1. With respect to regulation, allosterically activated by GTP. Inhibited by UTP. In terms of biological role, catalyzes the reversible phosphorylation of UMP to UDP. This is Uridylate kinase from Bradyrhizobium diazoefficiens (strain JCM 10833 / BCRC 13528 / IAM 13628 / NBRC 14792 / USDA 110).